A 541-amino-acid chain; its full sequence is uncharacterized protein (541 aa).

Helical transmembrane passes span 4-23 (FVAN…LAIG), 30-47 (FSLG…FAAV), 57-79 (VYIL…AFFA), 91-113 (LAIT…IHLN), and 156-178 (LVAY…GLCA). RCK C-terminal domains follow at residues 187-271 (QEAH…VLGD) and 273-354 (LPGD…LFGD). Helical transmembrane passes span 362–384 (FNLF…EVPL), 389–411 (ALSL…VGRS), 424–446 (LALR…GASF), 456–478 (LTII…VVGY), and 516–538 (LGYT…VVLF).

It belongs to the AAE transporter (TC 2.A.81) family.

It is found in the cell membrane. This is an uncharacterized protein from Corynebacterium diphtheriae (strain ATCC 700971 / NCTC 13129 / Biotype gravis).